We begin with the raw amino-acid sequence, 252 residues long: Flap endonuclease Xni (252 aa).

Mg(2+) is bound at residue Asp-105. The 90-residue stretch at 162–251 (EQYQFLDFIA…EINLKQFRVK (90 aa)) folds into the 5'-3' exonuclease domain. Residues Leu-172, Ala-173, Pro-181, Ile-183, and Ile-186 each contribute to the K(+) site. The segment at 185–190 (GIGPKS) is interaction with DNA.

This sequence belongs to the Xni family. Requires Mg(2+) as cofactor. K(+) serves as cofactor.

Functionally, has flap endonuclease activity. During DNA replication, flap endonucleases cleave the 5'-overhanging flap structure that is generated by displacement synthesis when DNA polymerase encounters the 5'-end of a downstream Okazaki fragment. This Shewanella denitrificans (strain OS217 / ATCC BAA-1090 / DSM 15013) protein is Flap endonuclease Xni.